Reading from the N-terminus, the 508-residue chain is uncharacterized protein (508 aa).

The helical transmembrane segment at 7–29 (ALAIVLALILSLALPELLFQLYP) threads the bilayer.

It is found in the membrane. This is an uncharacterized protein from Archaeoglobus fulgidus (strain ATCC 49558 / DSM 4304 / JCM 9628 / NBRC 100126 / VC-16).